A 157-amino-acid chain; its full sequence is Serine-protein kinase RsbW (157 aa).

It belongs to the anti-sigma-factor family.

It catalyses the reaction L-seryl-[protein] + ATP = O-phospho-L-seryl-[protein] + ADP + H(+). The enzyme catalyses L-threonyl-[protein] + ATP = O-phospho-L-threonyl-[protein] + ADP + H(+). Its function is as follows. Negative regulator of sigma-B activity. Phosphorylates and inactivates its specific antagonist protein, RsbV. Upon phosphorylation of RsbV, RsbW is released and binds to sigma-B, thereby blocking its ability to form an RNA polymerase holoenzyme (E-sigma-B). The polypeptide is Serine-protein kinase RsbW (Listeria monocytogenes serovar 1/2a (strain ATCC BAA-679 / EGD-e)).